The sequence spans 183 residues: CKLF-like MARVEL transmembrane domain-containing protein 6 (183 aa).

Met-1 bears the N-acetylmethionine mark. A disordered region spans residues 1-20; it reads MENGAVYSPTTEEDPGPARG. At 1-39 the chain is on the cytoplasmic side; sequence MENGAVYSPTTEEDPGPARGPRSGLAAYCFLGRLPLLRR. Position 8 is a phosphoserine (Ser-8). The MARVEL domain occupies 33–160; that stretch reads RLPLLRRVLK…DFVTMLYEKR (128 aa). The helical transmembrane segment at 40–60 threads the bilayer; that stretch reads VLKGLQLSLSLLAFICEEVVS. Residues 61 to 67 are Extracellular-facing; the sequence is QCTLCGG. A helical membrane pass occupies residues 68-88; the sequence is LYFFEFVSCSAFLLSLLILIV. The Cytoplasmic segment spans residues 89-106; it reads YCTPFYERVDTTKVKSSD. A helical transmembrane segment spans residues 107–127; the sequence is FYITLGTGCVFLLASIIFVST. Over 128–134 the chain is Extracellular; it reads HDRTSAE. The helical transmembrane segment at 135 to 155 threads the bilayer; that stretch reads IAAIVFGFIASFMFLLDFVTM. Over 156 to 183 the chain is Cytoplasmic; the sequence is LYEKRQESQLRKSENTTRAEALTEPLNA. Thr-171 is subject to Phosphothreonine.

This sequence belongs to the chemokine-like factor family. Interacts with PD-L1/CD274 (via transmembrane domain); the interaction is direct. Interacts with CMTM4. Interacts with CD58, ARG1, ENO1 and TMPO.

It is found in the cell membrane. The protein localises to the early endosome membrane. It localises to the recycling endosome membrane. In terms of biological role, master regulator of recycling and plasma membrane expression of PD-L1/CD274, an immune inhibitory ligand critical for immune tolerance to self and antitumor immunity. Associates with both constitutive and IFNG-induced PD-L1/CD274 at recycling endosomes, where it protects PD-L1/CD274 from being targeted for lysosomal degradation, likely by preventing its ubiquitination. May stabilize PD-L1/CD274 expression on antigen presenting cells and potentiates inhibitory signaling by PDCD1/CD279, its receptor on T-cells, ultimately triggering T-cell anergy. The sequence is that of CKLF-like MARVEL transmembrane domain-containing protein 6 (CMTM6) from Pongo abelii (Sumatran orangutan).